Consider the following 386-residue polypeptide: Patatin group M-3 (386 aa).

The signal sequence occupies residues 1-23 (MATTKSFLILFFMILATTSSTCA). Residues 32-229 (LSIDGGGIKG…TVGDPALLSL (198 aa)) enclose the PNPLA domain. The GXGXXG signature appears at 36–41 (GGGIKG). The short motif at 75-79 (GTSTG) is the GXSXG element. Ser77 (nucleophile) is an active-site residue. Asn115 carries an N-linked (GlcNAc...) asparagine glycan. The active-site Proton acceptor is Asp215. Positions 215–217 (DGG) match the DGA/G motif. Residues 321 to 384 (ENALTGTTTE…DRKKLRANKA (64 aa)) are a coiled coil.

The protein belongs to the patatin family. Tuber.

The protein localises to the vacuole. Functionally, probable lipolytic acyl hydrolase (LAH), an activity which is thought to be involved in the response of tubers to pathogens. The polypeptide is Patatin group M-3 (Solanum tuberosum (Potato)).